The sequence spans 442 residues: Lipoyl synthase, apicoplast (442 aa).

Positions 1 to 25 are cleaved as a signal peptide; it reads MHVLTPSLYIYAFFIVCVRLKCGRS. The interval 92 to 154 is disordered; sequence LLRSESATDE…EKKPDWFHVP (63 aa). A compositionally biased stretch (basic and acidic residues) spans 109 to 127; that stretch reads LKEKLKESPANWGKDKQEE. The [4Fe-4S] cluster site is built by cysteine 177, cysteine 182, cysteine 188, cysteine 203, cysteine 207, cysteine 210, and serine 418. Residues 189–407 enclose the Radical SAM core domain; the sequence is WNIGTATIML…KEEGMKMGFK (219 aa).

This sequence belongs to the radical SAM superfamily. Lipoyl synthase family. It depends on [4Fe-4S] cluster as a cofactor.

Its subcellular location is the plastid. The protein resides in the apicoplast. It catalyses the reaction [[Fe-S] cluster scaffold protein carrying a second [4Fe-4S](2+) cluster] + N(6)-octanoyl-L-lysyl-[protein] + 2 oxidized [2Fe-2S]-[ferredoxin] + 2 S-adenosyl-L-methionine + 4 H(+) = [[Fe-S] cluster scaffold protein] + N(6)-[(R)-dihydrolipoyl]-L-lysyl-[protein] + 4 Fe(3+) + 2 hydrogen sulfide + 2 5'-deoxyadenosine + 2 L-methionine + 2 reduced [2Fe-2S]-[ferredoxin]. It functions in the pathway protein modification; protein lipoylation via endogenous pathway; protein N(6)-(lipoyl)lysine from octanoyl-[acyl-carrier-protein]: step 2/2. Catalyzes the radical-mediated insertion of two sulfur atoms into the C-6 and C-8 positions of the octanoyl moiety bound to the lipoyl domains of lipoate-dependent enzymes, thereby converting the octanoylated domains into lipoylated derivatives. The sequence is that of Lipoyl synthase, apicoplast from Plasmodium vivax (strain Salvador I).